Reading from the N-terminus, the 122-residue chain is Ribosome-binding factor A (122 aa).

It belongs to the RbfA family. As to quaternary structure, monomer. Binds 30S ribosomal subunits, but not 50S ribosomal subunits or 70S ribosomes.

The protein resides in the cytoplasm. In terms of biological role, one of several proteins that assist in the late maturation steps of the functional core of the 30S ribosomal subunit. Associates with free 30S ribosomal subunits (but not with 30S subunits that are part of 70S ribosomes or polysomes). Required for efficient processing of 16S rRNA. May interact with the 5'-terminal helix region of 16S rRNA. This is Ribosome-binding factor A from Moorella thermoacetica (strain ATCC 39073 / JCM 9320).